Here is a 95-residue protein sequence, read N- to C-terminus: Small ribosomal subunit protein bS18 (95 aa).

It belongs to the bacterial ribosomal protein bS18 family. As to quaternary structure, part of the 30S ribosomal subunit. Forms a tight heterodimer with protein bS6.

In terms of biological role, binds as a heterodimer with protein bS6 to the central domain of the 16S rRNA, where it helps stabilize the platform of the 30S subunit. This chain is Small ribosomal subunit protein bS18, found in Rickettsia peacockii (strain Rustic).